The sequence spans 292 residues: 4-hydroxy-tetrahydrodipicolinate synthase (292 aa).

A pyruvate-binding site is contributed by T45. The active-site Proton donor/acceptor is Y133. The active-site Schiff-base intermediate with substrate is K161. Residue I203 participates in pyruvate binding.

It belongs to the DapA family. In terms of assembly, homotetramer; dimer of dimers.

It localises to the cytoplasm. The catalysed reaction is L-aspartate 4-semialdehyde + pyruvate = (2S,4S)-4-hydroxy-2,3,4,5-tetrahydrodipicolinate + H2O + H(+). It participates in amino-acid biosynthesis; L-lysine biosynthesis via DAP pathway; (S)-tetrahydrodipicolinate from L-aspartate: step 3/4. In terms of biological role, catalyzes the condensation of (S)-aspartate-beta-semialdehyde [(S)-ASA] and pyruvate to 4-hydroxy-tetrahydrodipicolinate (HTPA). The chain is 4-hydroxy-tetrahydrodipicolinate synthase from Sodalis glossinidius (strain morsitans).